Reading from the N-terminus, the 1439-residue chain is Fanconi anemia group D2 protein (1439 aa).

K563 is covalently cross-linked (Glycyl lysine isopeptide (Lys-Gly) (interchain with G-Cter in ubiquitin)).

Belongs to the Fanconi anemia protein FANCD2 family. In terms of assembly, homodimer; cannot be ubiquitinated and does not bind DNA. Part of a FANCI-FANCD2 heterodimeric complex that binds and scans dsDNA for DNA damage. Interacts directly with FANCE and FANCI. Interacts with USP1 and MEN1. The ubiquitinated form specifically interacts with BRCA1 and BLM. Both the nonubiquitinated and the monoubiquitinated forms interact with BRCA2; this interaction is mediated by phosphorylated FANCG and the complex also includes XCCR3. The ubiquitinated form specifically interacts with MTMR15/FAN1 (via UBZ-type zinc finger), leading to recruit MTMR15/FAN1 to sites of DNA damage. Interacts with DCLRE1B/Apollo. Interacts with POLN. Interacts with UHRF1 and UHRF2; these interactions promote FANCD2 activation. In terms of processing, monoubiquitinated on Lys-563 during S phase and upon genotoxic stress. Deubiquitinated by USP1 as cells enter G2/M, or once DNA repair is completed. Monoubiquitination prevents DNA release from the FANCI-FANCD2 complex. FANCD2 is only ubiquitinated in the FANCI-FANCD2 complex and the monoubiquitination of FANCD2 is promoted by phosphorylation of FANCI. Post-translationally, phosphorylated in response to various genotoxic stresses by ATM and/or ATR.

The protein localises to the nucleus. Required for maintenance of chromosomal stability. Promotes accurate and efficient pairing of homologs during meiosis. Involved in the repair of DNA double-strand breaks, both by homologous recombination and single-strand annealing. The FANCI-FANCD2 complex binds and scans double-stranded DNA (dsDNA) for DNA damage; this complex stalls at DNA junctions between double-stranded DNA and single-stranded DNA. May participate in S phase and G2 phase checkpoint activation upon DNA damage. Plays a role in preventing breakage and loss of missegregating chromatin at the end of cell division, particularly after replication stress. Required for the targeting, or stabilization, of BLM to non-centromeric abnormal structures induced by replicative stress. Promotes BRCA2/FANCD1 loading onto damaged chromatin. May also be involved in B-cell immunoglobulin isotype switching. The polypeptide is Fanconi anemia group D2 protein (Gallus gallus (Chicken)).